A 453-amino-acid chain; its full sequence is Malate dehydrogenase [NADP], chloroplastic (453 aa).

The N-terminal 68 residues, 1–68 (MAVVKLSPWA…RLSSPASIRC (68 aa)), are a transit peptide targeting the chloroplast. A disulfide bridge links Cys88 with Cys93. 117–123 (GAAGMIS) contributes to the NADP(+) binding site. Substrate is bound by residues Arg198 and Arg204. NADP(+)-binding positions include Asn211, Gln218, and 235–237 (VGN). The substrate site is built by Asn237 and Arg268. His293 acts as the Proton acceptor in catalysis. A disulfide bond links Cys429 and Cys441.

Belongs to the LDH/MDH superfamily. MDH type 2 family. As to quaternary structure, homodimer.

Its subcellular location is the plastid. It is found in the chloroplast. The catalysed reaction is (S)-malate + NADP(+) = oxaloacetate + NADPH + H(+). Its activity is regulated as follows. Chloroplast NADP-MDH is activated upon illumination. In order to be enzymatically active, disulfide bridges on the protein must be reduced by thioredoxin which receives electrons from ferredoxin and the electron transport system of photosynthesis. Functionally, the chloroplastic, NADP-dependent form is essential for the photosynthesis C4 cycle, which allows plants to circumvent the problem of photorespiration. In C4 plants, NADP-MDH activity acts to convert oxaloacetate to malate in chloroplasts of mesophyll cells for transport to the bundle sheath cells. The protein is Malate dehydrogenase [NADP], chloroplastic of Flaveria bidentis (Coastal plain yellowtops).